A 480-amino-acid polypeptide reads, in one-letter code: Cytochrome b-c1 complex subunit 1, mitochondrial (480 aa).

The N-terminal 34 residues, 1 to 34 (MAASVVCRAATAGAQVLLRARRSPALLRTPALRS), are a transit peptide targeting the mitochondrion. Residues Lys111 and Lys138 each carry the N6-acetyllysine modification. The residue at position 163 (Lys163) is an N6-acetyllysine; alternate. N6-succinyllysine; alternate is present on Lys163. Ser212 is modified (phosphoserine). Position 248 is an N6-acetyllysine (Lys248).

It belongs to the peptidase M16 family. UQCRC1/QCR1 subfamily. Component of the ubiquinol-cytochrome c oxidoreductase (cytochrome b-c1 complex, complex III, CIII), a multisubunit enzyme composed of 11 subunits. The complex is composed of 3 respiratory subunits cytochrome b, cytochrome c1 and Rieske protein UQCRFS1, 2 core protein subunits UQCRC1/QCR1 and UQCRC2/QCR2, and 6 low-molecular weight protein subunits UQCRH/QCR6, UQCRB/QCR7, UQCRQ/QCR8, UQCR10/QCR9, UQCR11/QCR10 and subunit 9, the cleavage product of Rieske protein UQCRFS1. The complex exists as an obligatory dimer and forms supercomplexes (SCs) in the inner mitochondrial membrane with NADH-ubiquinone oxidoreductase (complex I, CI) and cytochrome c oxidase (complex IV, CIV), resulting in different assemblies (supercomplex SCI(1)III(2)IV(1) and megacomplex MCI(2)III(2)IV(2)). Interacts with UQCC6. Interacts with STMP1. In terms of tissue distribution, expressed in brain, including substantia nigra, striatum, cortex and cerebellum, and in spinal cord, heart, kidney, liver and muscle.

It localises to the mitochondrion inner membrane. Its function is as follows. Component of the ubiquinol-cytochrome c oxidoreductase, a multisubunit transmembrane complex that is part of the mitochondrial electron transport chain which drives oxidative phosphorylation. The respiratory chain contains 3 multisubunit complexes succinate dehydrogenase (complex II, CII), ubiquinol-cytochrome c oxidoreductase (cytochrome b-c1 complex, complex III, CIII) and cytochrome c oxidase (complex IV, CIV), that cooperate to transfer electrons derived from NADH and succinate to molecular oxygen, creating an electrochemical gradient over the inner membrane that drives transmembrane transport and the ATP synthase. The cytochrome b-c1 complex catalyzes electron transfer from ubiquinol to cytochrome c, linking this redox reaction to translocation of protons across the mitochondrial inner membrane, with protons being carried across the membrane as hydrogens on the quinol. In the process called Q cycle, 2 protons are consumed from the matrix, 4 protons are released into the intermembrane space and 2 electrons are passed to cytochrome c. The 2 core subunits UQCRC1/QCR1 and UQCRC2/QCR2 are homologous to the 2 mitochondrial-processing peptidase (MPP) subunits beta-MPP and alpha-MPP respectively, and they seem to have preserved their MPP processing properties. May be involved in the in situ processing of UQCRFS1 into the mature Rieske protein and its mitochondrial targeting sequence (MTS)/subunit 9 when incorporated into complex III. Seems to play an important role in the maintenance of proper mitochondrial function in nigral dopaminergic neurons. The sequence is that of Cytochrome b-c1 complex subunit 1, mitochondrial (UQCRC1) from Homo sapiens (Human).